Here is a 128-residue protein sequence, read N- to C-terminus: Small ribosomal subunit protein eS8 (128 aa).

The interval 1-31 (MAWYQGNDLRKPTGGKKTRHRKKRKHELGRP) is disordered. Residues 13 to 27 (TGGKKTRHRKKRKHE) show a composition bias toward basic residues.

This sequence belongs to the eukaryotic ribosomal protein eS8 family. Part of the 30S ribosomal subunit.

The sequence is that of Small ribosomal subunit protein eS8 from Staphylothermus marinus (strain ATCC 43588 / DSM 3639 / JCM 9404 / F1).